The primary structure comprises 396 residues: Elongation factor Tu 1 (396 aa).

Residues Lys-10 to Thr-206 form the tr-type G domain. Positions Gly-19–Thr-26 are G1. Residue Gly-19 to Thr-26 participates in GTP binding. Mg(2+) is bound at residue Thr-26. The G2 stretch occupies residues Gly-60–Ser-64. Residues Asp-81–Gly-84 form a G3 region. Residues Asp-81 to His-85 and Asn-136 to Asp-139 contribute to the GTP site. Positions Asn-136–Asp-139 are G4. The G5 stretch occupies residues Ser-174–Arg-176.

Belongs to the TRAFAC class translation factor GTPase superfamily. Classic translation factor GTPase family. EF-Tu/EF-1A subfamily. In terms of assembly, monomer.

It localises to the cytoplasm. It catalyses the reaction GTP + H2O = GDP + phosphate + H(+). GTP hydrolase that promotes the GTP-dependent binding of aminoacyl-tRNA to the A-site of ribosomes during protein biosynthesis. The polypeptide is Elongation factor Tu 1 (Xanthomonas campestris pv. campestris (strain B100)).